A 335-amino-acid chain; its full sequence is tRNA N6-adenosine threonylcarbamoyltransferase (335 aa).

A divalent metal cation-binding residues include His-109, His-113, and Tyr-130. Residues 130–134 (YVSGG), Asp-162, Gly-177, Glu-181, and Asn-266 contribute to the substrate site. An a divalent metal cation-binding site is contributed by Asp-294.

It belongs to the KAE1 / TsaD family. As to quaternary structure, component of the EKC/KEOPS complex composed of at least GON7, TP53RK, TPRKB, OSGEP and LAGE3; the whole complex dimerizes. A divalent metal cation is required as a cofactor.

It localises to the cytoplasm. The protein localises to the nucleus. It carries out the reaction L-threonylcarbamoyladenylate + adenosine(37) in tRNA = N(6)-L-threonylcarbamoyladenosine(37) in tRNA + AMP + H(+). Its function is as follows. Component of the EKC/KEOPS complex that is required for the formation of a threonylcarbamoyl group on adenosine at position 37 (t(6)A37) in tRNAs that read codons beginning with adenine. The complex is probably involved in the transfer of the threonylcarbamoyl moiety of threonylcarbamoyl-AMP (TC-AMP) to the N6 group of A37. OSGEP likely plays a direct catalytic role in this reaction, but requires other protein(s) of the complex to fulfill this activity. This chain is tRNA N6-adenosine threonylcarbamoyltransferase, found in Bos taurus (Bovine).